We begin with the raw amino-acid sequence, 423 residues long: UPF0229 protein PFLU_5583 (423 aa).

Positions 64-109 are disordered; the sequence is LHHGRGGKQTVVHPGNKEFTTGEHIQRPQGGGGGKGPGKAGNSGEG. Positions 92–107 are enriched in gly residues; sequence QGGGGGKGPGKAGNSG.

This sequence belongs to the UPF0229 family.

This Pseudomonas fluorescens (strain SBW25) protein is UPF0229 protein PFLU_5583.